The sequence spans 72 residues: Phosphonoacetate hydrolase (72 aa).

As to quaternary structure, monomer. Unlike bacterial phosphonoacetate hydrolase, does not require zinc as a cofactor. serves as cofactor.

It carries out the reaction phosphonoacetate + H2O = acetate + phosphate + H(+). Unaffected by EDTA or Ca(2+), Co(2+), Cu(2+), Mg(2+), Mn(2+), Ni(2+) and Zn(2+). The sequence is that of Phosphonoacetate hydrolase from Penicillium oxalicum.